The sequence spans 373 residues: D-alanine--D-alanine ligase (373 aa).

Positions 165–369 (KRLAREAGIP…FGDLVSALIA (205 aa)) constitute an ATP-grasp domain. 192-247 (KERLGLPVFVKPARGGSSIGISKVDSWEEFDAAIDLAFSNDNKVIVEAMIHGAEVE) lines the ATP pocket. Mg(2+) contacts are provided by D324, E336, and N338.

It belongs to the D-alanine--D-alanine ligase family. It depends on Mg(2+) as a cofactor. Mn(2+) serves as cofactor.

Its subcellular location is the cytoplasm. It catalyses the reaction 2 D-alanine + ATP = D-alanyl-D-alanine + ADP + phosphate + H(+). It functions in the pathway cell wall biogenesis; peptidoglycan biosynthesis. In terms of biological role, cell wall formation. This chain is D-alanine--D-alanine ligase, found in Corynebacterium jeikeium (strain K411).